The primary structure comprises 501 residues: Solute carrier family 2, facilitated glucose transporter member 5 (501 aa).

M1 carries the post-translational modification N-acetylmethionine. Topologically, residues 1–18 (MEQQDQSMKEGRLTLVLA) are cytoplasmic. A helical membrane pass occupies residues 19–39 (LATLIAAFGSSFQYGYNVAAV). Y32 provides a ligand contact to D-fructose. Residues 40–68 (NSPALLMQQFYNETYYGRTGEFMEDFPLT) are Extracellular-facing. N-linked (GlcNAc...) asparagine glycosylation is present at N51. A helical membrane pass occupies residues 69-91 (LLWSVTVSMFPFGGFIGSLLVGP). The Cytoplasmic segment spans residues 92–98 (LVNKFGR). A helical membrane pass occupies residues 99-119 (KGALLFNNIFSIVPAILMGCS). The Extracellular portion of the chain corresponds to 120 to 126 (RVATSFE). The helical transmembrane segment at 127–149 (LIIISRLLVGICAGVSSNVVPMY) threads the bilayer. Topologically, residues 150-161 (LGELAPKNLRGA) are cytoplasmic. A helical membrane pass occupies residues 162 to 182 (LGVVPQLFITVGILVAQIFGL). Position 167 (Q167) interacts with D-fructose. The Extracellular portion of the chain corresponds to 183–192 (RNLLANVDGW). Residues 193 to 213 (PILLGLTGVPAALQLLLLPFF) form a helical membrane-spanning segment. The Cytoplasmic portion of the chain corresponds to 214-277 (PESPRYLLIQ…LFRMRSLRWQ (64 aa)). The helical transmembrane segment at 278–298 (LLSIIVLMGGQQLSGVNAIYY) threads the bilayer. Residues Q288 and 296–298 (IYY) each bind D-fructose. At 299-313 (YADQIYLSAGVPEEH) the chain is on the extracellular side. The chain crosses the membrane as a helical span at residues 314–334 (VQYVTAGTGAVNVVMTFCAVF). Residues 335–342 (VVELLGRR) lie on the Cytoplasmic side of the membrane. Residues 343–363 (LLLLLGFSICLIACCVLTAAL) form a helical membrane-spanning segment. Residues 364 to 371 (ALQDTVSW) are Extracellular-facing. The chain crosses the membrane as a helical span at residues 372–394 (MPYISIVCVISYVIGHALGPSPI). Residue H387 coordinates D-fructose. At 395–412 (PALLITEIFLQSSRPSAF) the chain is on the cytoplasmic side. A helical membrane pass occupies residues 413 to 433 (MVGGSVHWLSNFTVGLIFPFI). Residue 419–420 (HW) participates in D-fructose binding. The Extracellular segment spans residues 434-439 (QEGLGP). The chain crosses the membrane as a helical span at residues 440–460 (YSFIVFAVICLLTTIYIFLIV). Residues 461–501 (PETKAKTFIEINQIFTKMNKVSEVYPEKEELKELPPVTSEQ) lie on the Cytoplasmic side of the membrane.

In terms of tissue distribution, detected in skeletal muscle, and in jejunum brush border membrane and basolateral membrane (at protein level). Expressed in small intestine, and at much lower levels in kidney, skeletal muscle, and adipose tissue.

It localises to the apical cell membrane. It is found in the cell membrane. Its subcellular location is the sarcolemma. It carries out the reaction D-fructose(out) = D-fructose(in). Its activity is regulated as follows. The uptake of 2-deoxyglucose is inhibited by cytochalasin B. Fructose transport is inhibited by the flavonoids epigallocatechin gallate and apigenin but not quercetin. Its function is as follows. Functions as a fructose transporter that has only low activity with other monosaccharides. Can mediate the uptake of 2-deoxyglucose, but with low efficiency. Essential for fructose uptake in the small intestine. Plays a role in the regulation of salt uptake and blood pressure in response to dietary fructose. Required for the development of high blood pressure in response to high dietary fructose intake. This Homo sapiens (Human) protein is Solute carrier family 2, facilitated glucose transporter member 5.